The sequence spans 321 residues: Tetraacyldisaccharide 4'-kinase (321 aa).

54-61 is an ATP binding site; sequence SVGGTGKT.

Belongs to the LpxK family.

The enzyme catalyses a lipid A disaccharide + ATP = a lipid IVA + ADP + H(+). It functions in the pathway glycolipid biosynthesis; lipid IV(A) biosynthesis; lipid IV(A) from (3R)-3-hydroxytetradecanoyl-[acyl-carrier-protein] and UDP-N-acetyl-alpha-D-glucosamine: step 6/6. Its function is as follows. Transfers the gamma-phosphate of ATP to the 4'-position of a tetraacyldisaccharide 1-phosphate intermediate (termed DS-1-P) to form tetraacyldisaccharide 1,4'-bis-phosphate (lipid IVA). This chain is Tetraacyldisaccharide 4'-kinase, found in Rickettsia conorii (strain ATCC VR-613 / Malish 7).